Consider the following 376-residue polypeptide: Cysteine synthase 1 (376 aa).

The transit peptide at 1-16 (MFRHGVRTFATTSLRR) directs the protein to the mitochondrion. Position 79 is an N6-(pyridoxal phosphate)lysine (lysine 79). Pyridoxal 5'-phosphate-binding positions include asparagine 109, 215–219 (GTGGT), and serine 314.

Belongs to the cysteine synthase/cystathionine beta-synthase family. Pyridoxal 5'-phosphate is required as a cofactor.

Its subcellular location is the mitochondrion. It carries out the reaction O-succinyl-L-serine + hydrogen sulfide = L-cysteine + succinate. The catalysed reaction is O-acetyl-L-serine + hydrogen sulfide = L-cysteine + acetate. Its pathway is amino-acid biosynthesis; L-cysteine biosynthesis; L-cysteine from L-serine: step 2/2. In terms of biological role, catalyzes the conversion of O-succinyl-L-serine into cysteine, the last step in the cysteine biosynthesis pathway. Can also use O-acetyl-L-serine. This chain is Cysteine synthase 1 (cys-17), found in Neurospora crassa (strain ATCC 24698 / 74-OR23-1A / CBS 708.71 / DSM 1257 / FGSC 987).